Consider the following 381-residue polypeptide: Complement decay-accelerating factor (381 aa).

Positions 1 to 34 are cleaved as a signal peptide; the sequence is MTVARPSVPAALPLLGELPRLLLLVLLCLPAVWG. Sushi domains are found at residues 35 to 96, 96 to 160, 161 to 222, and 223 to 285; these read DCGL…FCNR, RSCE…FCKK, KSCP…ECRE, and IYCP…ECRG. Intrachain disulfides connect Cys-36/Cys-81 and Cys-65/Cys-94. Asn-95 carries an N-linked (GlcNAc...) asparagine glycan. Intrachain disulfides connect Cys-98–Cys-145, Cys-129–Cys-158, Cys-163–Cys-204, Cys-190–Cys-220, Cys-225–Cys-267, and Cys-253–Cys-283. Residues 277–354 are disordered; the sequence is SGPPPECRGK…PNKGSGTTSG (78 aa). The segment covering 287-309 has biased composition (polar residues); it reads SLTSKVPPTVQKPTTVNVPTTEV. Low complexity predominate over residues 310–328; it reads SPTSQKTTTKTTTPNAQAT. Ser-353 carries the GPI-anchor amidated serine lipid modification. A propeptide spans 354–381 (removed in mature form); the sequence is GTTRLLSGHTCFTLTGLLGTLVTMGLLT.

It belongs to the receptors of complement activation (RCA) family. Monomer (major form) and non-disulfide-linked, covalent homodimer (minor form). Interacts with ADGRE5. In terms of assembly, (Microbial infection) Interacts with coxsackievirus A21, coxsackieviruses B1, B3 and B5 capsid proteins. As to quaternary structure, (Microbial infection) Interacts with human enterovirus 70 and D68 capsid proteins. (Microbial infection) Interacts with human echoviruses 6, 7, 11, 12, 20 and 21 capsid proteins. Post-translationally, the Ser/Thr-rich domain is heavily O-glycosylated. In terms of tissue distribution, expressed on the plasma membranes of all cell types that are in intimate contact with plasma complement proteins. It is also found on the surfaces of epithelial cells lining extracellular compartments, and variants of the molecule are present in body fluids and in extracellular matrix.

It is found in the cell membrane. The protein resides in the secreted. In terms of biological role, this protein recognizes C4b and C3b fragments that condense with cell-surface hydroxyl or amino groups when nascent C4b and C3b are locally generated during C4 and c3 activation. Interaction of daf with cell-associated C4b and C3b polypeptides interferes with their ability to catalyze the conversion of C2 and factor B to enzymatically active C2a and Bb and thereby prevents the formation of C4b2a and C3bBb, the amplification convertases of the complement cascade. Inhibits complement activation by destabilizing and preventing the formation of C3 and C5 convertases, which prevents complement damage. Its function is as follows. (Microbial infection) Acts as a receptor for Coxsackievirus A21, coxsackieviruses B1, B3 and B5. Functionally, (Microbial infection) Acts as a receptor for Human enterovirus 70 and D68. (Microbial infection) Acts as a receptor for Human echoviruses 6, 7, 11, 12, 20 and 21. This is Complement decay-accelerating factor (CD55) from Homo sapiens (Human).